We begin with the raw amino-acid sequence, 235 residues long: 2,3-bisphosphoglycerate-dependent phosphoglycerate mutase 1 (235 aa).

Substrate-binding positions include 8-15 (RHGESVAN), 21-22 (TG), Arg60, 87-90 (ERHY), Lys98, and 114-115 (RR). Catalysis depends on His9, which acts as the Tele-phosphohistidine intermediate. The Proton donor/acceptor role is filled by Glu87.

This sequence belongs to the phosphoglycerate mutase family. BPG-dependent PGAM subfamily.

The catalysed reaction is (2R)-2-phosphoglycerate = (2R)-3-phosphoglycerate. Its pathway is carbohydrate degradation; glycolysis; pyruvate from D-glyceraldehyde 3-phosphate: step 3/5. Its function is as follows. Catalyzes the interconversion of 2-phosphoglycerate and 3-phosphoglycerate. In Latilactobacillus sakei subsp. sakei (strain 23K) (Lactobacillus sakei subsp. sakei), this protein is 2,3-bisphosphoglycerate-dependent phosphoglycerate mutase 1.